We begin with the raw amino-acid sequence, 371 residues long: 4-hydroxybenzoate polyprenyltransferase, mitochondrial (371 aa).

A mitochondrion-targeting transit peptide spans 1-45 (MLGSCGAGLVRGLRAETQAWLWGTRGRSLALVHAARGLHAANWQP). Residues 46–83 (SPGQGPRGRPLSLSAAAVVNSAPRPLQPYLRLMRLDKP) are Mitochondrial matrix-facing. The chain crosses the membrane as a helical span at residues 84–104 (IGTWLLYLPCTWSIGLAADPG). Residues 105–108 (CLPD) are Mitochondrial intermembrane-facing. A helical transmembrane segment spans residues 109 to 129 (WYMLSLFGTGAVLMRGAGCTI). The Mitochondrial matrix segment spans residues 130 to 171 (NDMWDRDYDKKVTRTASRPIAAGDISTFRSFVFLGGQLTLAL). A helical transmembrane segment spans residues 172–192 (GVLLCLNYYSIALGAASLLLV). Residues 193 to 200 (TTYPLMKR) lie on the Mitochondrial intermembrane side of the membrane. Residues 201-221 (ITYWPQLALGLTFNWGALLGW) form a helical membrane-spanning segment. Residues 222–231 (SAVKGSCDPS) lie on the Mitochondrial matrix side of the membrane. A helical transmembrane segment spans residues 232-252 (VCLPLYFSGIMWTLIYDTIYA). Residues 253–277 (HQDKKDDALIGLKSTALLFREDTKK) are Mitochondrial intermembrane-facing. The chain crosses the membrane as a helical span at residues 278-298 (WLSGFSVAMLGALSLVGVNSG). The Mitochondrial matrix segment spans residues 299–300 (QT). The helical transmembrane segment at 301-321 (MPYYTALAAVGAHLAHQIYTL) threads the bilayer. Residues 322–332 (DINRPEDCWEK) are Mitochondrial intermembrane-facing. Residues 333–353 (FTSNRTIGLIIFLGIVLGNLC) form a helical membrane-spanning segment. Residues 354-371 (KAKETDKTRKNIENRMEN) lie on the Mitochondrial matrix side of the membrane.

It belongs to the UbiA prenyltransferase family. It depends on Mg(2+) as a cofactor.

Its subcellular location is the mitochondrion inner membrane. The enzyme catalyses an all-trans-polyprenyl diphosphate + 4-hydroxybenzoate = a 4-hydroxy-3-(all-trans-polyprenyl)benzoate + diphosphate. The catalysed reaction is all-trans-decaprenyl diphosphate + 4-hydroxybenzoate = 4-hydroxy-3-(all-trans-decaprenyl)benzoate + diphosphate. It catalyses the reaction all-trans-nonaprenyl diphosphate + 4-hydroxybenzoate = 4-hydroxy-3-(all-trans-nonaprenyl)benzoate + diphosphate. It participates in cofactor biosynthesis; ubiquinone biosynthesis. Mediates the second step in the final reaction sequence of coenzyme Q (CoQ) biosynthesis. Catalyzes the prenylation of para-hydroxybenzoate (PHB) with an all-trans polyprenyl donor (such as all-trans-decaprenyl diphosphate). The length of the polyprenyl side chain varies depending on the species, in humans, the side chain is comprised of 10 isoprenyls (decaprenyl) producing CoQ10 (also known as ubiquinone), whereas rodents predominantly generate CoQ9. However, this specificity is not complete, human tissues have low amounts of CoQ9 and rodent organs contain some CoQ10. Plays a central role in the biosynthesis of CoQ10. CoQ10 is a vital molecule that transports electrons from mitochondrial respiratory chain complexes. CoQs also function as cofactors for uncoupling protein and play a role as regulators of the extracellularly-induced ceramide-dependent apoptotic pathway. Regulates mitochondrial permeability transition pore (mPTP) opening and ROS production (pivotal events in cell death) in a tissue specific manner. The polypeptide is 4-hydroxybenzoate polyprenyltransferase, mitochondrial (Bos taurus (Bovine)).